Here is a 105-residue protein sequence, read N- to C-terminus: Small ribosomal subunit protein uS10 (105 aa).

It belongs to the universal ribosomal protein uS10 family. Part of the 30S ribosomal subunit.

Functionally, involved in the binding of tRNA to the ribosomes. The protein is Small ribosomal subunit protein uS10 of Nitratidesulfovibrio vulgaris (strain DSM 19637 / Miyazaki F) (Desulfovibrio vulgaris).